A 332-amino-acid chain; its full sequence is Beta-ketoacyl-[acyl-carrier-protein] synthase III (332 aa).

Residues C116 and H257 contribute to the active site. An ACP-binding region spans residues 258–262 (QANQR). N287 is a catalytic residue.

This sequence belongs to the thiolase-like superfamily. FabH family. Homodimer.

The protein resides in the cytoplasm. The enzyme catalyses malonyl-[ACP] + acetyl-CoA + H(+) = 3-oxobutanoyl-[ACP] + CO2 + CoA. It participates in lipid metabolism; fatty acid biosynthesis. In terms of biological role, catalyzes the condensation reaction of fatty acid synthesis by the addition to an acyl acceptor of two carbons from malonyl-ACP. Catalyzes the first condensation reaction which initiates fatty acid synthesis and may therefore play a role in governing the total rate of fatty acid production. Possesses both acetoacetyl-ACP synthase and acetyl transacylase activities. Its substrate specificity determines the biosynthesis of branched-chain and/or straight-chain of fatty acids. The polypeptide is Beta-ketoacyl-[acyl-carrier-protein] synthase III (Acaryochloris marina (strain MBIC 11017)).